Consider the following 506-residue polypeptide: Glucan endo-1,3-beta-glucosidase 13 (506 aa).

Positions 1–22 (MARDFKLIFSISILLLLLDCCY) are cleaved as a signal peptide. A glycan (N-linked (GlcNAc...) asparagine) is linked at N70. E119 functions as the Proton donor in the catalytic mechanism. 3 N-linked (GlcNAc...) asparagine glycosylation sites follow: N127, N175, and N212. E264 acts as the Nucleophile in catalysis. N356 and N361 each carry an N-linked (GlcNAc...) asparagine glycan. An intrachain disulfide couples C370 to C433. Residues N459 and N465 are each glycosylated (N-linked (GlcNAc...) asparagine). S471 carries GPI-anchor amidated serine lipidation. Positions 472 to 506 (SASTPRGNELLQWILKLCLMISLFFSLQTMNSQAL) are cleaved as a propeptide — removed in mature form.

It belongs to the glycosyl hydrolase 17 family. Contains two additional disulfide bonds.

Its subcellular location is the secreted. It is found in the cell wall. The protein resides in the cell membrane. The enzyme catalyses Hydrolysis of (1-&gt;3)-beta-D-glucosidic linkages in (1-&gt;3)-beta-D-glucans.. In Arabidopsis thaliana (Mouse-ear cress), this protein is Glucan endo-1,3-beta-glucosidase 13.